The primary structure comprises 596 residues: Probable ATP-dependent RNA helicase DDX52 (596 aa).

The residue at position 15 (lysine 15) is an N6-acetyllysine. Phosphoserine is present on serine 39. Positions leucine 68 to glutamate 94 are disordered. The short motif at glutamine 163 to methionine 191 is the Q motif element. The Helicase ATP-binding domain occupies isoleucine 194 to valine 372. Residue alanine 207–threonine 214 participates in ATP binding. The DEAD box signature appears at aspartate 316–aspartate 319. Residues threonine 383–glutamine 544 form the Helicase C-terminal domain. Residues alanine 575–serine 596 form a disordered region. Positions aspartate 577 to lysine 589 are enriched in basic residues.

This sequence belongs to the DEAD box helicase family. DDX52/ROK1 subfamily.

The protein resides in the nucleus. It is found in the nucleolus. The catalysed reaction is ATP + H2O = ADP + phosphate + H(+). The sequence is that of Probable ATP-dependent RNA helicase DDX52 (DDX52) from Bos taurus (Bovine).